A 393-amino-acid polypeptide reads, in one-letter code: Protein TsgA (393 aa).

Helical transmembrane passes span 11–31, 51–71, 78–98, 101–121, 134–154, 162–182, 206–226, 245–265, 273–293, 298–318, 332–352, and 361–381; these read WISF…GMVM, FLNA…EIVP, FGFI…SLAL, AAMF…TFLI, LLFT…VAAF, WYWV…LTFG, IGVL…LGFI, ALVS…SFIL, ILTV…TGTQ, WFIL…ITLG, FILT…GPIV, and LLTA…LGFV.

This sequence belongs to the major facilitator superfamily. TsgA family.

It is found in the cell inner membrane. The polypeptide is Protein TsgA (Salmonella dublin (strain CT_02021853)).